The following is a 221-amino-acid chain: NEDD4 family-interacting protein 1 (221 aa).

At alanine 2 the chain carries N-acetylalanine. The interaction with UBE2L3 stretch occupies residues 2-41 (ALALAALAAVEPACGTGYQQLQNEEEPGEREQTAGDAPPP). The Cytoplasmic portion of the chain corresponds to 2 to 116 (ALALAALAAV…ADQLRIGNDG (115 aa)). The interval 15–45 (CGTGYQQLQNEEEPGEREQTAGDAPPPYSSI) is disordered. 3 short sequence motifs (PPxY motif) span residues 39-42 (PPPY), 64-67 (PPSY), and 74-76 (PSY). Positions 42-76 (YSSISAESAAYFDYKDESGFPKPPSYNVATTLPSY) are interaction with ITCH. Residues 117–137 (IFMLTFFMAFLFNWIGFFLSF) traverse the membrane as a helical segment. The Extracellular segment spans residues 138–143 (CLTTSA). Residues 144–164 (AGRYGAISGFGLSLIKWILIV) form a helical membrane-spanning segment. Residues 165–172 (RFSTYFPG) are Cytoplasmic-facing. The chain crosses the membrane as a helical span at residues 173 to 193 (YFDGQYWLWWVFLVLGFLLFL). The Extracellular portion of the chain corresponds to 194 to 221 (RGFINYAKVRKMPETFSNLPRTRVLFIY).

As to quaternary structure, forms heterodimers with NDFIP2. Interacts with several E3 ubiquitin-protein ligases, including ITCH, NEDD4, NEDD4L and WWP2. The interaction with NEDD4, NEDD4L and ITCH leads to relocalization of these proteins to exosomes and eventually to exosomal secretion. Interacts with SR1402. Interacts with SLC11A2/DMT1. Interacts with PTEN. May interact with phosphorylated EGFR. Interacts with BRAT1. Interacts with KCNH2. Interacts with MAVS. Part of a complex containing ITCH, NDFIP1 and MAP3K7. Interacts (via N-terminus) with UBE2L3; the interaction mediates recruitment of UBE2L3 to ITCH. In terms of processing, ubiquitinated by NEDD4; mono-, di- and polyubiquitinated forms are detected. Ubiquitination regulates its degradation. Undergoes transient tyrosine phosphorylation following EGF stimulation, most probably by catalyzed by SRC. Phosphorylation SRC is enhanced in the presence of NDFIP2 which may act as a scaffold to recruit SRC to NDFIP1.

The protein resides in the endosome membrane. Its subcellular location is the golgi apparatus membrane. It localises to the synapse. It is found in the synaptosome. The protein localises to the cell projection. The protein resides in the dendrite. Its subcellular location is the secreted. Its function is as follows. Activates HECT domain-containing E3 ubiquitin-protein ligases, including NEDD4 and ITCH, and consequently modulates the stability of their targets. As a result, controls many cellular processes. Prevents chronic T-helper cell-mediated inflammation by activating ITCH and thus controlling JUNB degradation. Promotes pancreatic beta cell death through degradation of JUNB and inhibition of the unfolded protein response, leading to reduction of insulin secretion. Restricts the production of pro-inflammatory cytokines in effector Th17 T-cells by promoting ITCH-mediated ubiquitination degradation of RORC. Together with NDFIP2, limits the cytokine signaling and expansion of effector Th2 T-cells by promoting degradation of JAK1, probably by ITCH- and NEDD4L-mediated ubiquitination. Regulates peripheral T-cell tolerance to self and foreign antigens, forcing the exit of naive CD4+ T-cells from the cell cycle before they become effector T-cells. Negatively regulates RLR-mediated antiviral response by promoting SMURF1-mediated ubiquitination and subsequent degradation of MAVS. Negatively regulates KCNH2 potassium channel activity by decreasing its cell-surface expression and interfering with channel maturation through recruitment of NEDD4L to the Golgi apparatus where it mediates KCNH2 degradation. In cortical neurons, mediates the ubiquitination of the divalent metal transporter SLC11A2/DMT1 by NEDD4L, leading to its down-regulation and protection of the cells from cobalt and iron toxicity. Important for normal development of dendrites and dendritic spines in cortex. Enhances the ubiquitination of BRAT1 mediated by: NEDD4, NEDD4L and ITCH and is required for the nuclear localization of ubiquitinated BRAT1. Enhances the ITCH-mediated ubiquitination of MAP3K7 by recruiting E2 ubiquitin-conjugating enzyme UBE2L3 to ITCH. Modulates EGFR signaling through multiple pathways. In particular, may regulate the ratio of AKT1-to-MAPK8 signaling in response to EGF, acting on AKT1 probably through PTEN destabilization and on MAPK8 through ITCH-dependent MAP2K4 inactivation. As a result, may control cell growth rate. Inhibits cell proliferation by promoting PTEN nuclear localization and changing its signaling specificity. The polypeptide is NEDD4 family-interacting protein 1 (Ndfip1) (Rattus norvegicus (Rat)).